The following is an 858-amino-acid chain: Magnesium transporter ALR2 (858 aa).

Low complexity predominate over residues 1-14 (MSSLSTSFDSSSDL). 3 disordered regions span residues 1-81 (MSSL…NGGY), 318-337 (TYNH…TSGS), and 365-396 (NNES…EGND). Topologically, residues 1–741 (MSSLSTSFDS…NNKVTEMLGK (741 aa)) are cytoplasmic. The span at 46 to 61 (PIRHEALALKVDETKD) shows a compositional bias: basic and acidic residues. Over residues 67 to 81 (SSSNGENSGVENGGY) the composition is skewed to low complexity. 2 stretches are compositionally biased toward basic and acidic residues: residues 367–379 (ESVR…DLHP) and 386–395 (NKIEGEKEGN). Residues 742–762 (VTMLGTMLVPLNVITGLFGMN) form a helical membrane-spanning segment. The Extracellular portion of the chain corresponds to 763 to 771 (VKVPGRNGS). A helical transmembrane segment spans residues 772 to 792 (IAWWYGILGVLLLLAVISWFL). The Cytoplasmic portion of the chain corresponds to 793–858 (ASYWIKKIDP…SLPSRYSRYN (66 aa)).

Belongs to the CorA metal ion transporter (MIT) (TC 1.A.35) family.

Its subcellular location is the cell membrane. Plasma membrane magnesium transporter. The polypeptide is Magnesium transporter ALR2 (ALR2) (Saccharomyces cerevisiae (strain ATCC 204508 / S288c) (Baker's yeast)).